A 673-amino-acid chain; its full sequence is Poly(glycerol-phosphate) alpha-glucosyltransferase (673 aa).

Serine 2 carries the post-translational modification Phosphoserine.

This sequence belongs to the glycosyltransferase group 1 family. Glycosyltransferase 4 subfamily.

The protein localises to the cytoplasm. It catalyses the reaction 4-O-{[(2R)-1-glycerylphospho](n)-(2R)-1-glycerylphospho}-N-acetyl-beta-D-mannosaminyl-(1-&gt;4)-N-acetyl-alpha-D-glucosaminyl undecaprenyl diphosphate + n UDP-alpha-D-glucose = 4-O-{[(2R)-2-alpha-D-glucosyl-1-glycerylphospho](n)-(2R)-1-glycerylphospho}-N-acetyl-beta-D-mannosaminyl-(1-&gt;4)-N-acetyl-alpha-D-glucosaminyl undecaprenyl diphosphate + n UDP + n H(+). Its pathway is cell wall biogenesis; poly(glycerol phosphate) teichoic acid biosynthesis. In terms of biological role, catalyzes the addition of glucose to the C-2 hydroxy group of the glycerol units in teichoic acid. This chain is Poly(glycerol-phosphate) alpha-glucosyltransferase (tagE), found in Bacillus subtilis (strain 168).